We begin with the raw amino-acid sequence, 437 residues long: Transcription factor ets-4 (437 aa).

A disordered region spans residues 1-30 (MNGTGSVGHRWNSLSPEPHSGTESTASTPF). The segment covering 21–30 (GTESTASTPF) has biased composition (polar residues). Lys32 participates in a covalent cross-link: Glycyl lysine isopeptide (Lys-Gly) (interchain with G-Cter in SUMO). The residue at position 73 (Ser73) is a Phosphoserine. Residue Lys83 forms a Glycyl lysine isopeptide (Lys-Gly) (interchain with G-Cter in SUMO) linkage. A PNT domain is found at 120–202 (HLIQDISTTC…AQLQVWKTGT (83 aa)). Positions 275–302 (QGTVLPSPSNSDTSSNGSSQDMNDDDID) are disordered. Residues 280 to 293 (PSPSNSDTSSNGSS) are compositionally biased toward low complexity. Positions 349–432 (VHLWQFIREL…KKQRLVYKFL (84 aa)) form a DNA-binding region, ETS.

This sequence belongs to the ETS family. May interact with cebp-1. May interact with tdpt-1 to facilitate its sumoylation. Post-translationally, phosphorylation is required for axon regeneration. Sumoylated; sumoylation inhibits phosphorylation, which is required for probable interaction with cebp-1 and consequently the expression of svh-2. In terms of tissue distribution, expressed in cells of the anterior and posterior bulbs of the pharynx, seam cells, a few unidentified cells of the vulva, the hypodermis, several unidentified neurons, labial socket cells of the head and rectal cells.

The protein localises to the nucleus. Transcription factor which binds to 5'-GGAA/T-3' DNA consensus sequences. Both positively and negatively regulates the expression of target genes. Plays a role in the regulation of adult lifespan, which may in part be through modulation of daf-16 activity. Regulates the expression of genes such as svh-2 in response to axon injury and in addition, may function downstream of the cAMP signaling pathway to promote axon regeneration. Regulates the expression of lipid metabolism genes and may also control the expression of the RNA-binding protein rege-1 which too has been implicated in the control of fat accumulation. The protein is Transcription factor ets-4 of Caenorhabditis elegans.